A 392-amino-acid polypeptide reads, in one-letter code: MATHSLSFFFRVLLLLFLTLSERIKGQGVGINYGQIANNLPSPARVAVLLRSLNITRVKLYDADPNVLFSFSNSQVDFMIGLGNEYLQNMSTDPTKAQDWLQQRLEPHISKTRITSIVVGNEIFKTNDHVLIQSLLPAMKSVYAALTNLGLEKQVTVTSAHSLDILSTSYPPSSGSFKEEFIQYLQPLLDFHSQIESPFLINAYPFFAYKDSPKEVPLEYVLFQPNQGMVDPNTNLHYDNMLFAQVDALYSAIKTLGHTDIEVRISETGWPSKGDENEIGASPENAALYNGNLLKLIQQRKGTPAKQSVPIDVYVFALFNENLKPGPVSERNYGLFYPDGKPVYNVGMQGYLPDIIYTSRATTIKILNLWRVVMGLAVAWFILDMGDKMRMR.

The signal sequence occupies residues 1-21 (MATHSLSFFFRVLLLLFLTLS). Residues Asn-54 and Asn-89 are each glycosylated (N-linked (GlcNAc...) asparagine). Glu-122 (proton donor) is an active-site residue. The Nucleophile role is filled by Glu-267. Ser-359 is lipidated: GPI-anchor amidated serine. The propeptide at 360 to 392 (RATTIKILNLWRVVMGLAVAWFILDMGDKMRMR) is removed in mature form.

The protein belongs to the glycosyl hydrolase 17 family.

It is found in the cell membrane. The protein localises to the secreted. Its subcellular location is the cell wall. It localises to the cytoplasm. It carries out the reaction Hydrolysis of (1-&gt;3)-beta-D-glucosidic linkages in (1-&gt;3)-beta-D-glucans.. The chain is Glucan endo-1,3-beta-glucosidase 14 from Arabidopsis thaliana (Mouse-ear cress).